The primary structure comprises 96 residues: Co-chaperonin GroES (96 aa).

Belongs to the GroES chaperonin family. Heptamer of 7 subunits arranged in a ring. Interacts with the chaperonin GroEL.

The protein localises to the cytoplasm. Functionally, together with the chaperonin GroEL, plays an essential role in assisting protein folding. The GroEL-GroES system forms a nano-cage that allows encapsulation of the non-native substrate proteins and provides a physical environment optimized to promote and accelerate protein folding. GroES binds to the apical surface of the GroEL ring, thereby capping the opening of the GroEL channel. This Alcanivorax borkumensis (strain ATCC 700651 / DSM 11573 / NCIMB 13689 / SK2) protein is Co-chaperonin GroES.